We begin with the raw amino-acid sequence, 887 residues long: Phosphatidylinositol 3-kinase catalytic subunit type 3 (887 aa).

The region spanning 35–184 (YKAVLEDPML…LAKLTKAHRQ (150 aa)) is the C2 PI3K-type domain. Positions 150–170 (EADGSEPTKTPGRTSSTLSED) are disordered. The span at 156 to 170 (PTKTPGRTSSTLSED) shows a compositional bias: polar residues. Thr-163 is modified (phosphothreonine; by AMPK). Ser-165 carries the post-translational modification Phosphoserine; by AMPK. A phosphoserine mark is found at Ser-244, Ser-261, and Ser-282. The region spanning 282–520 (SDHGLKPNAA…PKTHEMYLNV (239 aa)) is the PIK helical domain. Disordered regions lie at residues 416–435 (EPTK…NSGI) and 446–468 (ITSP…SSDG). The segment covering 423–435 (QGSVSESVSNSGI) has biased composition (low complexity). Residues 449–459 (PLPPVSSPPPA) are compositionally biased toward pro residues. The region spanning 605–871 (IPETATLFKS…LIDESVHALF (267 aa)) is the PI3K/PI4K catalytic domain. A G-loop region spans residues 611-617 (LFKSALM). The catalytic loop stretch occupies residues 740-748 (GVGDRHLDN). The segment at 759-780 (HIDFGYILGRDPKPLPPPMKLN) is activation loop.

The protein belongs to the PI3/PI4-kinase family. In terms of assembly, component of the PI3K (PI3KC3/PI3K-III/class III phosphatidylinositol 3-kinase) complex the core of which is composed of the catalytic subunit PIK3C3, the regulatory subunit PIK3R4 and BECN1 associating with additional regulatory/auxiliary subunits to form alternative complex forms. Alternative complex forms containing a fourth regulatory subunit in a mutually exclusive manner are: the PI3K complex I (PI3KC3-C1) containing ATG14, and the PI3K complex II (PI3KC3-C2) containing UVRAG. PI3KC3-C1 displays a V-shaped architecture with PIK3R4 serving as a bridge between PIK3C3 and the ATG14:BECN1 subcomplex. Both, PI3KC3-C1 and PI3KC3-C2, can associate with further regulatory subunits such as RUBCN, SH3GLB1/Bif-1 and AMBRA1. PI3KC3-C1 probably associates with PIK3CB. Interacts with RAB7A in the presence of PIK3R4. Interacts with AMBRA1. Interacts with BECN1P1/BECN2. Interacts with SLAMF1. May be a component of a complex composed of RAB5A (in GDP-bound form), DYN2 and PIK3C3. Interacts with NCKAP1L. Interacts with ATG14; this interaction is increased in the absence of TMEM39A. Interacts with STEEP1; the interaction is STING1-dependent and required for trafficking of STING1 from the endoplasmic reticulum. Interacts with YWHAG. Interacts with ARMC3. It depends on Mn(2+) as a cofactor. Post-translationally, ubiquitinated via 'Lys-29'- and 'Lys-48'-linked ubiquitination by UBE3C, promoting its degradation. Deubiquitination by ZRANB1/TRABID promotes its stabilization, leading to autophagosome maturation.

It is found in the midbody. It localises to the late endosome. Its subcellular location is the cytoplasmic vesicle. The protein localises to the autophagosome. The enzyme catalyses a 1,2-diacyl-sn-glycero-3-phospho-(1D-myo-inositol) + ATP = a 1,2-diacyl-sn-glycero-3-phospho-(1D-myo-inositol-3-phosphate) + ADP + H(+). In terms of biological role, catalytic subunit of the PI3K complex that mediates formation of phosphatidylinositol 3-phosphate; different complex forms are believed to play a role in multiple membrane trafficking pathways: PI3KC3-C1 is involved in initiation of autophagosomes and PI3KC3-C2 in maturation of autophagosomes and endocytosis. As part of PI3KC3-C1, promotes endoplasmic reticulum membrane curvature formation prior to vesicle budding. Involved in regulation of degradative endocytic trafficking and required for the abscission step in cytokinesis, probably in the context of PI3KC3-C2. Involved in the transport of lysosomal enzyme precursors to lysosomes. Required for transport from early to late endosomes. This is Phosphatidylinositol 3-kinase catalytic subunit type 3 from Sus scrofa (Pig).